The chain runs to 382 residues: Mannitol-1-phosphate 5-dehydrogenase (382 aa).

Residue Ala3–Gly14 participates in NAD(+) binding. Lys269 carries the post-translational modification N6-acetyllysine.

It belongs to the mannitol dehydrogenase family. Monomer.

It catalyses the reaction D-mannitol 1-phosphate + NAD(+) = beta-D-fructose 6-phosphate + NADH + H(+). This chain is Mannitol-1-phosphate 5-dehydrogenase, found in Escherichia coli O157:H7.